Reading from the N-terminus, the 431-residue chain is O-Mevalon transferase macI (431 aa).

An N-linked (GlcNAc...) asparagine glycan is attached at Asn176. 4 helical membrane-spanning segments follow: residues 198 to 218, 301 to 321, 336 to 356, and 404 to 424; these read IYAL…AILM, LLMM…YQVT, YFAL…VLGI, and LFAA…NFVA.

The protein belongs to the wax synthase family.

It is found in the membrane. It participates in secondary metabolite biosynthesis; terpenoid biosynthesis. Its function is as follows. O-Mevalon transferase; part of the gene cluster that mediates the biosynthesis of macrophorins, isoprenoid epoxycyclohexenones containing cyclized drimane moieties. The first step of the pathway is the synthesis of 6-methylsalicylic acid (6-MSA) by the polyketide synthase macA. 6-MSA is then converted to m-cresol by the decarboxylase macB. The cytochrome P450 monooxygenase macC then catalyzes the oxidation of m-cresol to toluquinol. Epoxidation of toluquinol is then performed by the short chain dehydrogenase macD, with the help of macE, and a further prenylation by macG leads to 7-deacetoxyyanuthone A. The next step is the hydroxylation of C-22 of 7-deacetoxyyanuthone A by the cytochrome P450 monooxygenase macH to yield 22-deacetylyanuthone A. O-Mevalon transferase macI then attaches mevalon to the hydroxyl group of 22-deacetylyanuthone A to produce yanuthone E. The terpene cyclase macJ catalyzes the cyclization of 22-deacetylyanuthone A to macrophorin A. MacJ is also able to catalyze cyclization of yanuthone E and 7-deacetoxyyanuthone A to their corresponding macrophorins. The macJ products can be further modified by macH and macJ, as well as by the FAD-dependent monooxygenase macF, to produce additional macrophorins, including 4'-oxomacrophorin A, 4'-oxomacrophorin D and 4'-oxomacrophorin E. The sequence is that of O-Mevalon transferase macI from Penicillium terrestre.